The chain runs to 100 residues: NADH-quinone oxidoreductase subunit K (100 aa).

The next 3 helical transmembrane spans lie at 4–24 (LQHG…GLVI), 28–48 (LLFM…AFVV), and 60–80 (VMYI…LALL).

The protein belongs to the complex I subunit 4L family. As to quaternary structure, NDH-1 is composed of 13 different subunits. Subunits NuoA, H, J, K, L, M, N constitute the membrane sector of the complex.

It localises to the cell inner membrane. The enzyme catalyses a quinone + NADH + 5 H(+)(in) = a quinol + NAD(+) + 4 H(+)(out). Its function is as follows. NDH-1 shuttles electrons from NADH, via FMN and iron-sulfur (Fe-S) centers, to quinones in the respiratory chain. The immediate electron acceptor for the enzyme in this species is believed to be ubiquinone. Couples the redox reaction to proton translocation (for every two electrons transferred, four hydrogen ions are translocated across the cytoplasmic membrane), and thus conserves the redox energy in a proton gradient. In Citrobacter koseri (strain ATCC BAA-895 / CDC 4225-83 / SGSC4696), this protein is NADH-quinone oxidoreductase subunit K.